Reading from the N-terminus, the 521-residue chain is uncharacterized protein (521 aa).

This is an uncharacterized protein from Magallana gigas (Pacific oyster).